Consider the following 207-residue polypeptide: Recombination protein RecR (207 aa).

A C4-type zinc finger spans residues 62–77 (CSRCNTFTEQDVCETC). Positions 85 to 184 (SVLCVVETPA…KVSRLARGVP (100 aa)) constitute a Toprim domain.

It belongs to the RecR family.

In terms of biological role, may play a role in DNA repair. It seems to be involved in an RecBC-independent recombinational process of DNA repair. It may act with RecF and RecO. The protein is Recombination protein RecR of Ralstonia nicotianae (strain ATCC BAA-1114 / GMI1000) (Ralstonia solanacearum).